The sequence spans 106 residues: ATP synthase-coupling factor 6, mitochondrial (106 aa).

The protein belongs to the eukaryotic ATPase subunit F6 family. In terms of assembly, F-type ATPases have 2 components, CF(1) - the catalytic core - and CF(0) - the membrane proton channel. CF(0) seems to have nine subunits: a, b, c, d, e, f, g, F6 and 8 (or A6L).

The protein resides in the mitochondrion. It is found in the mitochondrion inner membrane. In terms of biological role, mitochondrial membrane ATP synthase (F(1)F(0) ATP synthase or Complex V) produces ATP from ADP in the presence of a proton gradient across the membrane which is generated by electron transport complexes of the respiratory chain. F-type ATPases consist of two structural domains, F(1) - containing the extramembraneous catalytic core and F(0) - containing the membrane proton channel, linked together by a central stalk and a peripheral stalk. During catalysis, ATP synthesis in the catalytic domain of F(1) is coupled via a rotary mechanism of the central stalk subunits to proton translocation. Part of the complex F(0) domain and the peripheric stalk, which acts as a stator to hold the catalytic alpha(3)beta(3) subcomplex and subunit a/ATP6 static relative to the rotary elements. The sequence is that of ATP synthase-coupling factor 6, mitochondrial from Drosophila melanogaster (Fruit fly).